The following is a 256-amino-acid chain: Thiazole synthase (256 aa).

Lys98 acts as the Schiff-base intermediate with DXP in catalysis. 1-deoxy-D-xylulose 5-phosphate is bound by residues Gly159, 185–186 (AG), and 207–208 (NT).

Belongs to the ThiG family. As to quaternary structure, homotetramer. Forms heterodimers with either ThiH or ThiS.

The protein resides in the cytoplasm. It catalyses the reaction [ThiS sulfur-carrier protein]-C-terminal-Gly-aminoethanethioate + 2-iminoacetate + 1-deoxy-D-xylulose 5-phosphate = [ThiS sulfur-carrier protein]-C-terminal Gly-Gly + 2-[(2R,5Z)-2-carboxy-4-methylthiazol-5(2H)-ylidene]ethyl phosphate + 2 H2O + H(+). It participates in cofactor biosynthesis; thiamine diphosphate biosynthesis. Its function is as follows. Catalyzes the rearrangement of 1-deoxy-D-xylulose 5-phosphate (DXP) to produce the thiazole phosphate moiety of thiamine. Sulfur is provided by the thiocarboxylate moiety of the carrier protein ThiS. In vitro, sulfur can be provided by H(2)S. The sequence is that of Thiazole synthase from Aliivibrio fischeri (strain MJ11) (Vibrio fischeri).